Consider the following 684-residue polypeptide: Amino-acid acetyltransferase, mitochondrial (684 aa).

The segment at 414 to 439 (PQDATNSASEPRDPSQLSTVATRRKR) is disordered. Residues 415 to 434 (QDATNSASEPRDPSQLSTVA) are compositionally biased toward polar residues. In terms of domain architecture, N-acetyltransferase spans 505 to 674 (GKSRMTLNDP…YEGVCRGIEP (170 aa)).

This sequence belongs to the acetyltransferase family.

The protein localises to the mitochondrion. The enzyme catalyses L-glutamate + acetyl-CoA = N-acetyl-L-glutamate + CoA + H(+). It participates in amino-acid biosynthesis; L-arginine biosynthesis; N(2)-acetyl-L-ornithine from L-glutamate: step 1/4. In terms of biological role, N-acetylglutamate synthase involved in arginine biosynthesis. This is Amino-acid acetyltransferase, mitochondrial (ARG2) from Ajellomyces capsulatus (strain NAm1 / WU24) (Darling's disease fungus).